The sequence spans 376 residues: Glutamate 5-kinase (376 aa).

Position 15 (lysine 15) interacts with ATP. 3 residues coordinate substrate: serine 56, aspartate 143, and asparagine 155. 175 to 176 (SD) is a binding site for ATP. The 78-residue stretch at 281–358 (KGTLTIDAGA…PDVMMILGIT (78 aa)) folds into the PUA domain.

This sequence belongs to the glutamate 5-kinase family.

The protein localises to the cytoplasm. The catalysed reaction is L-glutamate + ATP = L-glutamyl 5-phosphate + ADP. It functions in the pathway amino-acid biosynthesis; L-proline biosynthesis; L-glutamate 5-semialdehyde from L-glutamate: step 1/2. Functionally, catalyzes the transfer of a phosphate group to glutamate to form L-glutamate 5-phosphate. The chain is Glutamate 5-kinase from Rhodopseudomonas palustris (strain TIE-1).